A 69-amino-acid polypeptide reads, in one-letter code: Probable rubredoxin HupI (69 aa).

Positions 16–67 (VTRLECGICWTVYDPADGDDVAQIAPGTPFAALPEEWHCPNCDAPKSKFMAI) constitute a Rubredoxin-like domain. Residues Cys-21, Cys-24, Cys-54, and Cys-57 each coordinate Fe cation.

It belongs to the rubredoxin family. Fe(3+) is required as a cofactor.

Functionally, could be an electron transport intermediate in hydrogen oxidation. This chain is Probable rubredoxin HupI (hupI), found in Bradyrhizobium diazoefficiens (strain JCM 10833 / BCRC 13528 / IAM 13628 / NBRC 14792 / USDA 110).